The sequence spans 392 residues: MQSPAVLVTSRRLQNAHTGLDLTVPQHQEVRGKMMSGHVEYQILVVTRLAAFKSAKHRPEDVVQFLVSKKYSEIEEFYQKLSSRYAAASLPPLPRKVLFVGESDIRERRAVFNEILRCVSKDAELAGSPELLEFLGTRSPGAAGLTSRDSSVLDGTDSQTGNDEEAFDFFEEQDQVAEEGPPVQSLKGEDAEESLEEEEALDPLGIMRSKKPKKHPKVAVKAKPSPRLTIFDEEVDPDEGLFGPGRKLSPQDPSEDVSSVDPLKLFDDPDLGGAIPLGDSLLLPAACESGGPTPSLSHRDASKELFRVEEDLDQILNLGAEPKPKPQLKPKPPVAAKPVIPRKPAVPPKAGPAEAVAGQQKPQEQIQAMDEMDILQYIQDHDTPAQAAPSLF.

Position 1 is an N-acetylmethionine (methionine 1). Phosphoserine is present on residues serine 3, serine 139, and serine 194. Positions 19-142 (GLDLTVPQHQ…EFLGTRSPGA (124 aa)) constitute a PX domain. Disordered regions lie at residues 138–162 (RSPG…QTGN), 174–265 (DQVA…PLKL), and 319–364 (GAEP…KPQE). The segment covering 190–201 (DAEESLEEEEAL) has biased composition (acidic residues). A compositionally biased stretch (basic residues) spans 208–220 (RSKKPKKHPKVAV). Serine 249 is modified (phosphoserine). The segment covering 325 to 335 (KPQLKPKPPVA) has biased composition (pro residues). N6-acetyllysine is present on lysine 337.

As to quaternary structure, binds HCLS1. Interacts with the SH3 domain of HCLS1 in vitro.

Functionally, may be a modulator of IL-2 signaling. This chain is HCLS1-binding protein 3 (HS1BP3), found in Homo sapiens (Human).